We begin with the raw amino-acid sequence, 297 residues long: Salivary glue protein Sgs-4 (297 aa).

Positions 1-21 (MRLELLVVLLVGLAALAPSGS) are cleaved as a signal peptide. Tandem repeats lie at residues 26–32 (TEPPRCE), 33–39 (TEPPRCE), 40–46 (TEPPRCE), 47–53 (TEPPRCE), 54–60 (TEPPRCE), 61–67 (TTTPKCE), 68–74 (TTPPTCR), 75–81 (TEPPTCK), 82–88 (TEPPTCR), 89–95 (TEPPTCK), 96–102 (TKPPTCR), 103–109 (TEPPTCR), 110–116 (TEPPTCK), 117–123 (TKPPTCK), 124–130 (TEPPTCK), 131–137 (TEPPTCR), 138–144 (TEPPTCK), 145–151 (TEPPTCR), 152–158 (TEPPTCK), 159–165 (TEPPTCK), and 166–172 (TEPPTCK). The segment at 26-84 (TEPPRCETEPPRCETEPPRCETEPPRCETEPPRCETTTPKCETTPPTCRTEPPTCKTEP) is disordered. The interval 26–179 (TEPPRCETEP…TCKTEPPCEK (154 aa)) is 22 X 7 AA approximate tandem repeats of T-[ETK]-[PT]-P-[RKT]-C-[ERK]. Basic and acidic residues predominate over residues 27–58 (EPPRCETEPPRCETEPPRCETEPPRCETEPPR). Residues 59-84 (CETTTPKCETTPPTCRTEPPTCKTEP) are compositionally biased toward low complexity. The span at 141–174 (PTCKTEPPTCRTEPPTCKTEPPTCKTEPPTCKTE) shows a compositional bias: low complexity. 2 disordered regions span residues 141–218 (PTCK…SGCG) and 243–297 (PDSK…KGGC). The stretch at 173-179 (TEPPCEK) is one 22; approximate repeat. 2 stretches are compositionally biased toward basic residues: residues 181–208 (CTKRIKRHRTKRTKRSKSTKKIVHHHNR) and 282–291 (NTTKKPRKTQ).

In terms of tissue distribution, salivary gland.

The protein localises to the secreted. This Drosophila melanogaster (Fruit fly) protein is Salivary glue protein Sgs-4 (Sgs4).